The chain runs to 82 residues: Putative membrane protein insertion efficiency factor (82 aa).

The protein belongs to the UPF0161 family.

It is found in the cell inner membrane. In terms of biological role, could be involved in insertion of integral membrane proteins into the membrane. The sequence is that of Putative membrane protein insertion efficiency factor from Rickettsia rickettsii (strain Iowa).